A 434-amino-acid chain; its full sequence is MAMQKIFAREILDSRGNPTVEVDLHTAKGRFRAAVPSGASTGIYEALELRDGDKSRYLGKGVLKAVEHINKTLGPALLEKKLSVVDQEKVDKFMIELDGTENKSKFGANAILGVSLAVCKAGAAEKGVPLYRHIADLAGNPDLVLPVPAFNVINGGSHAGNKLAMQEFMILPVGASSFKEAMRIGAEVYHHLKGVIKAKYGKDATNVGDEGGFAPNILENNEALELLKTAIQAAGYPDKVVIGMDVAASEFYRNGKYDLDFKSPDDPARHISGEKLGELYKSFIKNYPVVSIEDPFDQDDWATWTSFLSGVDIQIVGDDLTVTNPKRIAQAVEKKACNCLLLKVNQIGSVTESIQACKLAQSNGWGVMVSHRSGETEDTFIADLVVGLCTGQIKTGAPCRSERLAKYNQLMRIEEALGDKAVFAGRKFRNPKAK.

N-acetylalanine is present on alanine 2. Threonine 72 carries the phosphothreonine modification. Phosphoserine is present on residues serine 83 and serine 157. Residues histidine 158 and glutamate 167 each coordinate substrate. Serine 176 bears the Phosphoserine mark. Threonine 205 bears the Phosphothreonine mark. Glutamate 210 (proton donor) is an active-site residue. A Phosphothreonine modification is found at threonine 229. Residue tyrosine 236 is modified to Phosphotyrosine. A Mg(2+)-binding site is contributed by aspartate 245. Serine 263 is subject to Phosphoserine. The substrate site is built by glutamate 293 and aspartate 318. Mg(2+) is bound by residues glutamate 293 and aspartate 318. The Proton acceptor role is filled by lysine 343. Substrate-binding positions include 370–373 and lysine 394; that span reads SHRS.

This sequence belongs to the enolase family. Mammalian enolase is composed of 3 isozyme subunits, alpha, beta and gamma, which can form homodimers or heterodimers which are cell-type and development-specific. Interacts with PNKD. Requires Mg(2+) as cofactor. In terms of tissue distribution, the alpha/alpha homodimer is expressed in embryo and in most adult tissues. The alpha/beta heterodimer and the beta/beta homodimer are found in striated muscle, and the alpha/gamma heterodimer and the gamma/gamma homodimer in neurons.

The protein localises to the cytoplasm. The catalysed reaction is (2R)-2-phosphoglycerate = phosphoenolpyruvate + H2O. Its pathway is carbohydrate degradation; glycolysis; pyruvate from D-glyceraldehyde 3-phosphate: step 4/5. In terms of biological role, glycolytic enzyme that catalyzes the conversion of 2-phosphoglycerate to phosphoenolpyruvate. Appears to have a function in striated muscle development and regeneration. This chain is Beta-enolase (Eno3), found in Rattus norvegicus (Rat).